Here is a 607-residue protein sequence, read N- to C-terminus: Glucose-6-phosphate isomerase, glycosomal (607 aa).

E411 functions as the Proton donor in the catalytic mechanism. Active-site residues include H442 and K571. The Microbody targeting signal signature appears at 605 to 607; the sequence is SHL.

The protein belongs to the GPI family. As to quaternary structure, homodimer.

The protein resides in the glycosome. The catalysed reaction is alpha-D-glucose 6-phosphate = beta-D-fructose 6-phosphate. It participates in carbohydrate degradation; glycolysis; D-glyceraldehyde 3-phosphate and glycerone phosphate from D-glucose: step 2/4. The chain is Glucose-6-phosphate isomerase, glycosomal (PGI) from Trypanosoma brucei brucei.